Here is a 128-residue protein sequence, read N- to C-terminus: uncharacterized protein (128 aa).

Positions 2–127 (KLLQIRLLVN…DHNLIEIYKM (126 aa)) constitute a VOC domain. Residues Glu-48 and Glu-123 each contribute to the Ni(2+) site.

This sequence belongs to the glyoxalase I family.

This is an uncharacterized protein from Bacillus subtilis (strain 168).